The chain runs to 446 residues: N-succinylarginine dihydrolase (446 aa).

Substrate is bound by residues 19–28 (AGLSFGNVAS), Asn110, and 137–138 (HR). Glu174 is a catalytic residue. Arg213 lines the substrate pocket. His249 is an active-site residue. Asp251 and Asn364 together coordinate substrate. Cys370 serves as the catalytic Nucleophile.

It belongs to the succinylarginine dihydrolase family. As to quaternary structure, homodimer.

The catalysed reaction is N(2)-succinyl-L-arginine + 2 H2O + 2 H(+) = N(2)-succinyl-L-ornithine + 2 NH4(+) + CO2. It participates in amino-acid degradation; L-arginine degradation via AST pathway; L-glutamate and succinate from L-arginine: step 2/5. Its function is as follows. Catalyzes the hydrolysis of N(2)-succinylarginine into N(2)-succinylornithine, ammonia and CO(2). The sequence is that of N-succinylarginine dihydrolase from Burkholderia pseudomallei (strain 668).